Here is a 378-residue protein sequence, read N- to C-terminus: Beta-1,3-galactosyltransferase pvg3 (378 aa).

Topologically, residues 1–8 (MFSNSKKK) are cytoplasmic. The chain crosses the membrane as a helical; Signal-anchor for type II membrane protein span at residues 9 to 29 (IFLYVLIAGVATFSFAFLVLN). The Lumenal portion of the chain corresponds to 30 to 378 (RLQAEEHSLA…ATIPLPSLDV (349 aa)). Asn53, Asn97, Asn180, and Asn354 each carry an N-linked (GlcNAc...) asparagine glycan.

Belongs to the glycosyltransferase 31 family.

The protein localises to the endoplasmic reticulum membrane. The protein resides in the golgi apparatus. It is found in the golgi stack membrane. It catalyses the reaction 3-O-(beta-D-galactosyl-(1-&gt;4)-beta-D-xylosyl)-L-seryl-[protein] + UDP-alpha-D-galactose = 3-O-(beta-D-galactosyl-(1-&gt;3)-beta-D-galactosyl-(1-&gt;4)-beta-D-xylosyl)-L-seryl-[protein] + UDP + H(+). Functionally, involved in cell wall biogenesis. Has a role in the addition of Gal-beta1,3 moeities to galactomannans and their subsequent pyruvylation. Has a role in meiosis. This chain is Beta-1,3-galactosyltransferase pvg3 (pvg3), found in Schizosaccharomyces pombe (strain 972 / ATCC 24843) (Fission yeast).